A 436-amino-acid polypeptide reads, in one-letter code: Protein VHS2 (436 aa).

The tract at residues 1–34 (MDTSNHNQDHDSHVAAQRENDNNYMPPSPSMSES) is disordered. Basic and acidic residues predominate over residues 7-21 (NQDHDSHVAAQREND). Residues serine 53, serine 61, serine 102, and serine 172 each carry the phosphoserine modification. 4 disordered regions span residues 165–195 (RALG…DHGS), 211–266 (NNNN…HMNF), 282–360 (NNAN…EEDN), and 389–436 (NDNH…DTTK). The span at 171 to 183 (RSLSSQSFDNETS) shows a compositional bias: polar residues. Low complexity-rich tracts occupy residues 211–226 (NNNN…STAN), 238–261 (SFSS…ASPP), and 282–299 (NNAN…AALS). 4 positions are modified to phosphoserine: serine 299, serine 301, serine 303, and serine 325. Over residues 300 to 312 (RSPSNQQYLLKQQ) the composition is skewed to polar residues. The span at 401–436 (TINNNIKNSPAFTNSNPSSKSNSNSTITSMNPDTTK) shows a compositional bias: low complexity.

This sequence to yeast MFL3.

It localises to the cytoplasm. In terms of biological role, can suppress the synthetic lethality of the hal3 sit4 double mutation when overexpressed, suggesting that it is involved in the G1-S transition. The sequence is that of Protein VHS2 (VHS2) from Saccharomyces cerevisiae (strain ATCC 204508 / S288c) (Baker's yeast).